Reading from the N-terminus, the 87-residue chain is Small ribosomal subunit protein bS20 (87 aa).

Belongs to the bacterial ribosomal protein bS20 family.

Functionally, binds directly to 16S ribosomal RNA. The protein is Small ribosomal subunit protein bS20 of Nitrosomonas europaea (strain ATCC 19718 / CIP 103999 / KCTC 2705 / NBRC 14298).